Reading from the N-terminus, the 777-residue chain is Putative P4-specific DNA primase (777 aa).

Residues 35–60 (CPVCGGSDRFRFDDREGRGTWYCNQC) form a CHC2-type zinc finger. In terms of domain architecture, Toprim spans 208-296 (KRLWIAEGYA…VFGDWNDAFT (89 aa)). The SF3 helicase domain maps to 474–627 (EKRDVILAAL…IAPQERDPQL (154 aa)). 501–508 (GPGGSGKS) is a binding site for ATP.

As to quaternary structure, homohexamer.

It carries out the reaction ATP + H2O = ADP + phosphate + H(+). Functionally, this protein acts as a DNA primase generating di- to pentaribonucleotides; the predominant product being the dimer pppApG. It complexes specifically to the P4 origin of replication (ori) and its cis replication region (crr). It also acts as a DNA helicase. The protein is Putative P4-specific DNA primase (Alpha) of Escherichia coli (Bacteriophage P4).